The following is an 816-amino-acid chain: Sucrose synthase 2 (816 aa).

Ser-15 is subject to Phosphoserine. Positions 280–757 (MVFNVVILSP…GLQRIEEKYT (478 aa)) are GT-B glycosyltransferase.

Belongs to the glycosyltransferase 1 family. Plant sucrose synthase subfamily.

It carries out the reaction an NDP-alpha-D-glucose + D-fructose = a ribonucleoside 5'-diphosphate + sucrose + H(+). Functionally, sucrose-cleaving enzyme that provides UDP-glucose and fructose for various metabolic pathways. This chain is Sucrose synthase 2 (SUS1), found in Zea mays (Maize).